The following is a 122-amino-acid chain: Large ribosomal subunit protein bL20c (122 aa).

It belongs to the bacterial ribosomal protein bL20 family.

Its subcellular location is the plastid. It localises to the chloroplast. Its function is as follows. Binds directly to 23S ribosomal RNA and is necessary for the in vitro assembly process of the 50S ribosomal subunit. It is not involved in the protein synthesizing functions of that subunit. The protein is Large ribosomal subunit protein bL20c of Dioscorea elephantipes (Elephant's foot yam).